The chain runs to 174 residues: Co-chaperone protein HscB (174 aa).

The 73-residue stretch at 2–74 folds into the J domain; the sequence is DYFTLFGLPA…LKRAEYMLSL (73 aa).

The protein belongs to the HscB family. As to quaternary structure, interacts with HscA and stimulates its ATPase activity. Interacts with IscU.

Its function is as follows. Co-chaperone involved in the maturation of iron-sulfur cluster-containing proteins. Seems to help targeting proteins to be folded toward HscA. The sequence is that of Co-chaperone protein HscB from Yersinia pestis bv. Antiqua (strain Antiqua).